A 600-amino-acid polypeptide reads, in one-letter code: Probable methyltransferase PMT21 (600 aa).

The Cytoplasmic segment spans residues Met1–Arg16. Residues Ile17–Leu37 form a helical; Signal-anchor for type II membrane protein membrane-spanning segment. The Lumenal segment spans residues Tyr38 to Asn600. Asn594 carries an N-linked (GlcNAc...) asparagine glycan.

Belongs to the methyltransferase superfamily.

Its subcellular location is the endoplasmic reticulum membrane. The sequence is that of Probable methyltransferase PMT21 (ERD3) from Arabidopsis thaliana (Mouse-ear cress).